The sequence spans 153 residues: MKQGDRQTVMDIHEILKYLPHRYPLILVDRVVSLESGKRIHAYKNVSINEPYFSGHFPHHPVMPGVLIIEALAQAAALLTIRSENMEKDNGQVYYFVGIDAVRFKKPVIAGDQLVLKVEITRQLKGIWKYAACAEVDGQVVTEAQLMCTARAI.

H56 is a catalytic residue.

The protein belongs to the thioester dehydratase family. FabZ subfamily.

It localises to the cytoplasm. The enzyme catalyses a (3R)-hydroxyacyl-[ACP] = a (2E)-enoyl-[ACP] + H2O. Its function is as follows. Involved in unsaturated fatty acids biosynthesis. Catalyzes the dehydration of short chain beta-hydroxyacyl-ACPs and long chain saturated and unsaturated beta-hydroxyacyl-ACPs. The sequence is that of 3-hydroxyacyl-[acyl-carrier-protein] dehydratase FabZ from Nitrosomonas europaea (strain ATCC 19718 / CIP 103999 / KCTC 2705 / NBRC 14298).